The chain runs to 273 residues: Large ribosomal subunit protein uL2cz/uL2cy (273 aa).

2 disordered regions span residues 1 to 24 (MAIH…QAKS) and 224 to 254 (NPVD…PALG).

Belongs to the universal ribosomal protein uL2 family. As to quaternary structure, part of the 50S ribosomal subunit.

The protein resides in the plastid. It localises to the chloroplast. This Nymphaea alba (White water-lily) protein is Large ribosomal subunit protein uL2cz/uL2cy (rpl2-A).